Consider the following 956-residue polypeptide: MRPEGAGMDLGGGDGERLLEKSRREHWQLLGNLKTTVEGLVSANCPNVWSKYGGLERLCRDMQNILYHGLIHDQVCCRQADYWQFVKDIRWLSPHSALHVEKFISLHESDQSDTDSVSERAVAELWLQHSLQCHCLSAQLRPLLGDRQYIRKFYTETAFLLSDAHVTAMLQCLEAVEQNNPRLLAQIDASMFARKQESPLLVTKSQSLTALPGSTYTPPASYAQHSYFGSSSSLQSMPQSSHSSERRSTSFSLSGPSWQPQEDRECLSPAETQTTPAPLPSDSTLAQDSPLTAQEMSDSTLTSPLEASWVSSQNDSPSDVSEGPEYLAIGNPAPHGRTASCESHSSNGESSSSHLFSSSSSQKLESAASSLGDQEEGRQSQAGSVLRRSSFSEGQTAPVASGTKKSHIRSHSDTNIASRGAAGGPRNITIIVEDPIAEGGQYLCSGEGMFRRPSEGQSLISYLSEQDFGSCADLEKENAHFSISESLIAAIELMKCNMMSQCLEEEEVEEEDSDREIQELKQKIRLRRQQIRTKNLLPAYRETENGSFRVTSSSSQFSSRDSTQLSESGSAEDADDLEIQDADIRRSAVSNGKSSFSQNLSHCFLHSTSAEAVAMGLLKQFEGMQLPAASELEWLVPEHDAPQKLLPIPDSLPISPDDGQHADIYKLRIRVRGNLEWAPPRPQIIFNVHPAPTRKIAVAKQNYRCAGCGIRTDPDYIKRLRYCEYLGKYFCQCCHENAQMVVPSRILRKWDFSKYYVSNFSKDLLLKIWNDPLFNVQDINSALYRKVKLLNQVRLLRVQLYHMKNMFKTCRLAKELLDSFDVVPGHLTEDLHLYSLSDLTATKKGELGPRLAELTRAGAAHVERCMLCQAKGFICEFCQNEEDVIFPFELHKCRTCEECKACYHKTCFKSGRCPRCERLQARRELLAKQSLESYLSDYEEEPTEALALEATVLETT.

The 142-residue stretch at 49 to 190 (WSKYGGLERL…PRLLAQIDAS (142 aa)) folds into the RUN domain. An interaction with PIK3C3 region spans residues 50–181 (SKYGGLERLC…CLEAVEQNNP (132 aa)). Ser198 is subject to Phosphoserine. Positions 205–437 (SQSLTALPGS…ITIIVEDPIA (233 aa)) are interaction with YWHAB. Over residues 233 to 242 (SLQSMPQSSH) the composition is skewed to low complexity. The disordered stretch occupies residues 233-423 (SLQSMPQSSH…TNIASRGAAG (191 aa)). Phosphoserine is present on residues Ser250 and Ser268. Residues 270-319 (AETQTTPAPLPSDSTLAQDSPLTAQEMSDSTLTSPLEASWVSSQNDSPSD) show a composition bias toward polar residues. The interval 302–585 (TSPLEASWVS…DLEIQDADIR (284 aa)) is interaction with UVRAG. The span at 339-371 (ASCESHSSNGESSSSHLFSSSSSQKLESAASSL) shows a compositional bias: low complexity. Positions 379–395 (QSQAGSVLRRSSFSEGQ) are enriched in polar residues. 4 positions are modified to phosphoserine: Ser390, Ser412, Ser513, and Ser547. The interaction with BECN1 stretch occupies residues 490–542 (AIELMKCNMMSQCLEEEEVEEEDSDREIQELKQKIRLRRQQIRTKNLLPAYRE). Over residues 547-566 (SFRVTSSSSQFSSRDSTQLS) the composition is skewed to low complexity. The tract at residues 547-579 (SFRVTSSSSQFSSRDSTQLSESGSAEDADDLEI) is disordered. Residues 552–609 (SSSSQFSSRDSTQLSESGSAEDADDLEIQDADIRRSAVSNGKSSFSQNLSHCFLHSTS) are interaction with CYBA. Acidic residues predominate over residues 570–579 (SAEDADDLEI). Ser655 carries the phosphoserine modification. Residues 656–744 (PDDGQHADIY…HENAQMVVPS (89 aa)) form an interaction with CARD9 region. The segment at 705–956 (CAGCGIRTDP…ALEATVLETT (252 aa)) is interaction with Rab7.

Associates with PI3K (PI3KC3/PI3K-III/class III phosphatidylinositol 3-kinase) complex II (PI3KC3-C2) in which the core composed of the catalytic subunit PIK3C3, the regulatory subunit PIK3R4 and BECN1 is associated with UVRAG; in the complex interacts directly with PI3KC3 and UVRAG. Interacts with Rab7 (RAB7A or RAB7B) (GTP-bound form); Rab7 and UVRAG compete for RUBCN binding; can interact simultaneously with Rab7 and the PI3K complex. Interacts with CYBA and CYBB; indicative for the association with the CYBA:CYBB NADPH oxidase heterodimer. Interacts with NOX4 and probably associates with the CYBA:NOX4 complex. Interacts with YWHAB and CARD9 in a competitive and stimulation-dependent manner; RUBCN exchanges interaction from YWHAB to CARD9 upon stimulation with beta-1,3-glucan.

The protein resides in the late endosome. The protein localises to the lysosome. Its subcellular location is the early endosome. In terms of biological role, inhibits PIK3C3 activity; under basal conditions negatively regulates PI3K complex II (PI3KC3-C2) function in autophagy. Negatively regulates endosome maturation and degradative endocytic trafficking and impairs autophagosome maturation process. Can sequester UVRAG from association with a class C Vps complex (possibly the HOPS complex) and negatively regulates Rab7 activation. Functionally, involved in regulation of pathogen-specific host defense of activated macrophages. Following bacterial infection promotes NADH oxidase activity by association with CYBA thereby affecting TLR2 signaling and probably other TLR-NOX pathways. Stabilizes the CYBA:CYBB NADPH oxidase heterodimer, increases its association with TLR2 and its phagosome trafficking to induce antimicrobial burst of ROS and production of inflammatory cytokines. Following fungal or viral infection (implicating CLEC7A (dectin-1)-mediated myeloid cell activation or RIGI-dependent sensing of RNA viruses) negatively regulates pro-inflammatory cytokine production by association with CARD9 and sequestering it from signaling complexes. The chain is Run domain Beclin-1-interacting and cysteine-rich domain-containing protein from Mus musculus (Mouse).